The primary structure comprises 499 residues: Cytochrome P450 81E8 (499 aa).

The helical transmembrane segment at 3–23 (TFYLSLIISLFFLIITLKVFF) threads the bilayer. Residue cysteine 436 participates in heme binding.

This sequence belongs to the cytochrome P450 family. It depends on heme as a cofactor.

It is found in the membrane. In terms of biological role, probable monooxygenases exhibiting no activity with isoflavones such as formononetin, biochanin A, pseudobaptigenin, daidzein, genistein, isoformononetin and prunetin, or with flavonoids including naringenin, liquiritigenin, apigenin, luteolin, or kaempferol. The sequence is that of Cytochrome P450 81E8 from Medicago truncatula (Barrel medic).